Reading from the N-terminus, the 603-residue chain is Golgin subfamily A member 8B (603 aa).

Disordered regions lie at residues 1–82 (MAEE…NSRS), 95–125 (LKQQ…ELEG), 398–419 (TSAE…ESSG), and 460–492 (PGDS…GAAG). The segment covering 46–66 (AASGGCHSSEASSSASSSLHA) has biased composition (low complexity). A compositionally biased stretch (polar residues) spans 69–82 (SPCQEQAAVLNSRS). 2 coiled-coil regions span residues 82-173 (SIKI…GELE) and 212-440 (LKGH…LELG). Residues 100–124 (KQVEHQLEEEKKANNEKQKAERELE) are compositionally biased toward basic and acidic residues. A compositionally biased stretch (gly residues) spans 469–482 (PGGGHHQAGPGQGG). The interval 491-603 (AGDGVAACGS…CWAWLPRRRR (113 aa)) is golgi-targeting domain.

Belongs to the GOLGA8 family. Highly expressed in brain, heart and kidney. Detected at lower levels in liver, thymus, spleen, lung and peripheral blood leukocytes.

The protein localises to the golgi apparatus. It is found in the golgi stack membrane. Its function is as follows. May be involved in maintaining Golgi structure. This is Golgin subfamily A member 8B (GOLGA8B) from Homo sapiens (Human).